A 454-amino-acid polypeptide reads, in one-letter code: MTLGQFGGLFCIYLIAVIFILTLTYQEFRRVKFNFNVLFSMLYLLTFYFGFPLTCMLVFQFGVAVVPVEYLLYAMLSATAFYGIYYVTYKTRLRQPRSQPRTPIFTMNRVETNLTWVLLALVAVGTVGIFFMQNGFLLFKLDSYSKIFSSDVSGVALKRFFYFFIPAMLVVYFLKQDMRAWFFFLASTVAFGILTYVIVGGTRANIIIAFSLFLFIGIVRGWITLWMLAAAGVFGIVGMFWLALKRYGLDVNGAEAFYTFLYLTRDTFSPWENLGLLLQNYDKIDFQGLAPIVRDFYVFIPSALWPERPDLVLNTANYFTWDVLDNHSGLAISPTLIGSLVVMGGVLFIPLGAIVVGLIIKWFDWLYEQGKAESNRYKAAILQSFCFGAVFNIIVLAREGLDSFVSRVVFFCVIFGACLVLAKLLYWLFDTAGLIKRQGIKSNRLSMPNAGNQL.

11 consecutive transmembrane segments (helical) span residues Leu3 to Leu23, Phe39 to Phe59, Phe61 to Phe81, Leu119 to Phe139, Gly154 to Leu174, Ala180 to Gly200, Gly201 to Gly221, Trp222 to Leu242, Leu340 to Ile360, Tyr377 to Ala397, and Val409 to Phe429.

This sequence belongs to the WzyE family. Probably part of a complex composed of WzxE, WzyE and WzzE.

It localises to the cell inner membrane. It functions in the pathway bacterial outer membrane biogenesis; enterobacterial common antigen biosynthesis. In terms of biological role, probably involved in the polymerization of enterobacterial common antigen (ECA) trisaccharide repeat units. In Yersinia pseudotuberculosis serotype O:1b (strain IP 31758), this protein is Probable ECA polymerase.